A 161-amino-acid chain; its full sequence is Allophycocyanin subunit alpha-B (161 aa).

N4-methylasparagine is present on N71. C81 is a binding site for (2R,3E)-phycocyanobilin.

This sequence belongs to the phycobiliprotein family. As to quaternary structure, heterohexamer of two alpha chains, one alpha-B chain and three beta chains. Post-translationally, contains one covalently linked phycocyanobilin chromophore. The chromophore is added by phycocyanobilin lyase CpcS 1.

It localises to the cellular thylakoid membrane. Light-harvesting photosynthetic bile pigment-protein from the phycobiliprotein complex. Allophycocyanin has a maximum absorption at approximately 654 nanometers. This chain is Allophycocyanin subunit alpha-B (apcD), found in Nostoc sp. (strain PCC 7120 / SAG 25.82 / UTEX 2576).